Here is a 216-residue protein sequence, read N- to C-terminus: ATP-dependent Clp protease proteolytic subunit (216 aa).

The active-site Nucleophile is serine 101. Histidine 126 is a catalytic residue.

Belongs to the peptidase S14 family. Component of the chloroplastic Clp protease core complex.

It localises to the plastid. It is found in the chloroplast stroma. The catalysed reaction is Hydrolysis of proteins to small peptides in the presence of ATP and magnesium. alpha-casein is the usual test substrate. In the absence of ATP, only oligopeptides shorter than five residues are hydrolyzed (such as succinyl-Leu-Tyr-|-NHMec, and Leu-Tyr-Leu-|-Tyr-Trp, in which cleavage of the -Tyr-|-Leu- and -Tyr-|-Trp bonds also occurs).. In terms of biological role, cleaves peptides in various proteins in a process that requires ATP hydrolysis. Has a chymotrypsin-like activity. Plays a major role in the degradation of misfolded proteins. This is ATP-dependent Clp protease proteolytic subunit from Hordeum vulgare (Barley).